The chain runs to 661 residues: Phospholipid:diacylglycerol acyltransferase (661 aa).

The segment at methionine 1–arginine 71 is disordered. The Cytoplasmic segment spans residues methionine 1–leucine 80. Residues histidine 34–glycine 48 show a composition bias toward basic residues. Short sequence motifs (bipartite nuclear localization signal) lie at residues histidine 43–serine 50 and arginine 64–arginine 71. Basic and acidic residues predominate over residues lysine 54–glycine 70. The chain crosses the membrane as a helical span at residues isoleucine 81–valine 101. Topologically, residues histidine 102 to methionine 661 are lumenal. Glutamine 162 contacts substrate. Positions glycine 322–glycine 326 match the GHSXG lipase motif motif. Serine 324 serves as the catalytic Acyl-ester intermediate. Residue methionine 325 coordinates substrate. N-linked (GlcNAc...) asparagine glycans are attached at residues asparagine 453, asparagine 461, and asparagine 469. Aspartate 567 functions as the Charge relay system in the catalytic mechanism. A glycan (N-linked (GlcNAc...) asparagine) is linked at asparagine 594. Histidine 618 serves as the catalytic Charge relay system.

Belongs to the AB hydrolase superfamily. Lipase family.

The protein resides in the endoplasmic reticulum membrane. It is found in the nucleus inner membrane. It carries out the reaction a glycerophospholipid + a 1,2-diacyl-sn-glycerol = a monoacylglycerophospholipid + a triacyl-sn-glycerol. The catalysed reaction is a 1-acyl-sn-glycerol + a 1,2-diacyl-sn-glycero-3-phosphocholine = a 1-acyl-sn-glycero-3-phosphocholine + a 1,2-diacyl-sn-glycerol. It catalyses the reaction 1,2-di-(9Z-octadecenoyl)-sn-glycero-3-phosphoethanolamine + 1,2-di-(9Z-octadecenoyl)-sn-glycerol = 1-(9Z-octadecenoyl)-sn-glycero-3-phosphoethanolamine + 1,2,3-tri-(9Z-octadecenoyl)-glycerol. The enzyme catalyses 1,2-di-(9Z-octadecenoyl)-sn-glycerol + 1,2-di-(9Z-octadecenoyl)-sn-glycero-3-phosphocholine = 1,2,3-tri-(9Z-octadecenoyl)-glycerol + 1-(9Z-octadecenoyl)-sn-glycero-3-phosphocholine. It carries out the reaction 1-(9Z-octadecenoyl)-sn-glycerol + 1,2-di-(9Z-octadecenoyl)-sn-glycero-3-phosphocholine = di-(9Z)-octadecenoylglycerol + 1-(9Z-octadecenoyl)-sn-glycero-3-phosphocholine. The catalysed reaction is 2-(9Z-octadecenoyl)-glycerol + 1,2-di-(9Z-octadecenoyl)-sn-glycero-3-phosphocholine = 1,2-di-(9Z-octadecenoyl)-glycerol + 1-(9Z-octadecenoyl)-sn-glycero-3-phosphocholine. It catalyses the reaction 1-(9Z-octadecenoyl)-2-hexadecanoyl-sn-glycero-3-phosphoethanolamine + 1,2-di-(9Z-octadecenoyl)-sn-glycerol = 1,2-di-(9Z)-octadecenoyl-3-hexadecanoyl-sn-glycerol + 1-(9Z-octadecenoyl)-sn-glycero-3-phosphoethanolamine. The enzyme catalyses 1-(9Z-octadecenoyl)-2-octadecanoyl-sn-glycero-3-phosphoethanolamine + 1,2-di-(9Z-octadecenoyl)-sn-glycerol = 1,2-di-(9Z)-octadecenoyl-3-octadecanoyl-sn-glycerol + 1-(9Z-octadecenoyl)-sn-glycero-3-phosphoethanolamine. It carries out the reaction 1-(9Z)-octadecenoyl-2-(9Z,12Z)-octadecadienoyl-sn-glycero-3-phosphoethanolamine + 1,2-di-(9Z-octadecenoyl)-sn-glycerol = 1,2-di-(9Z)-octadecenoyl-3-(9Z,12Z)-octadecadienoyl-sn-glycerol + 1-(9Z-octadecenoyl)-sn-glycero-3-phosphoethanolamine. Its function is as follows. Catalyzes triacylglycerol (TAG) formation by an acyl-CoA independent pathway. The enzyme specifically transfers acyl groups from the sn-2 position of a phospholipid to diacylglycerol (DAG), thus forming an sn-1-lysophospholipid. The preferred acyl donors are phosphatidylethanolamine (PE) and phosphatidylcholine (PC). Also capable of using broad acyl donors such as phosphatidic acid (PA), phosphatidylserine (PS), phosphatidylglycerol (PG) and phosphatidylinositol (PI), as well as monogalactosyldiacylglycerol (MGDG), digalactosyldiacylglycerol (DGDG), and acyl-CoA, and it is more likely to use unsaturated acyl donors. As acyl acceptors, it prefers 1,2- over 1,3-diacylglycerol (DAG). Additionally, has esterification activity that can utilize methanol as acyl acceptor to generate fatty acid methyl esters (FAME). Can also utilize ceramide instead of DAG, acylating the ceramides by attaching a fatty acid to the hydroxy group on the first carbon atom of the long-chain base to produce 1-O-acylceramides. Involved in lipid particle synthesis from the endoplasmic reticulum, promoting localized TAG production at discrete ER subdomains. Relocates from the endoplasmic reticulum to a subdomain of the inner nuclear membrane upon nutrient starvation, where it provides a site of TAG synthesis, which is coupled with nuclear membrane remodeling. This Saccharomyces cerevisiae (strain ATCC 204508 / S288c) (Baker's yeast) protein is Phospholipid:diacylglycerol acyltransferase.